Here is a 406-residue protein sequence, read N- to C-terminus: 2,3-bisphosphoglycerate-independent phosphoglycerate mutase (406 aa).

The segment at 164–184 (VSSNDPKKTGVQPKTIHPDDD) is disordered.

The protein belongs to the BPG-independent phosphoglycerate mutase family. A-PGAM subfamily.

It catalyses the reaction (2R)-2-phosphoglycerate = (2R)-3-phosphoglycerate. It participates in carbohydrate degradation; glycolysis; pyruvate from D-glyceraldehyde 3-phosphate: step 3/5. In terms of biological role, catalyzes the interconversion of 2-phosphoglycerate and 3-phosphoglycerate. The polypeptide is 2,3-bisphosphoglycerate-independent phosphoglycerate mutase (Methanocorpusculum labreanum (strain ATCC 43576 / DSM 4855 / Z)).